The chain runs to 458 residues: Acetyl-CoA decarbonylase/synthase complex subunit gamma (458 aa).

The 4Fe-4S domain occupies 1–59 (MQVTAMDVYRLLPKTNCGKCNEASCMAFATKLIEKEVTLDDCPQLSGDERQKLENLLAP). [4Fe-4S] cluster contacts are provided by Cys-17, Cys-20, Cys-25, and Cys-42.

As to quaternary structure, heterodimer of delta and gamma chains. The ACDS complex is made up of alpha, epsilon, beta, gamma and delta chains with a probable stoichiometry of (alpha(2)epsilon(2))(4)-beta(8)-(gamma(1)delta(1))(8). Corrinoid serves as cofactor. [4Fe-4S] cluster is required as a cofactor.

The enzyme catalyses 5,6,7,8-tetrahydrosarcinapterin + methyl-Co(III)-[corrinoid Fe-S protein] = 5-methyltetrahydrosarcinapterin + Co(I)-[corrinoid Fe-S protein] + H(+). Its function is as follows. Part of a complex that catalyzes the reversible cleavage of acetyl-CoA, allowing autotrophic growth from CO(2). This is Acetyl-CoA decarbonylase/synthase complex subunit gamma from Methanothermobacter thermautotrophicus (strain ATCC 29096 / DSM 1053 / JCM 10044 / NBRC 100330 / Delta H) (Methanobacterium thermoautotrophicum).